Here is a 395-residue protein sequence, read N- to C-terminus: Elongation factor Tu (395 aa).

Residues 10–205 (KPHVNIGTIG…VDSYIPLPPR (196 aa)) form the tr-type G domain. A G1 region spans residues 19–26 (GHVDHGKT). 19 to 26 (GHVDHGKT) is a binding site for GTP. Threonine 26 contacts Mg(2+). The tract at residues 60 to 64 (GITIN) is G2. The interval 81–84 (DCPG) is G3. Residues 81–85 (DCPGH) and 136–139 (NKVD) contribute to the GTP site. Residues 136 to 139 (NKVD) form a G4 region. Residues 174–176 (SAT) form a G5 region.

It belongs to the TRAFAC class translation factor GTPase superfamily. Classic translation factor GTPase family. EF-Tu/EF-1A subfamily. As to quaternary structure, monomer.

It localises to the cytoplasm. The catalysed reaction is GTP + H2O = GDP + phosphate + H(+). Its function is as follows. GTP hydrolase that promotes the GTP-dependent binding of aminoacyl-tRNA to the A-site of ribosomes during protein biosynthesis. The protein is Elongation factor Tu of Terrimonas ferruginea (Flavobacterium ferrugineum).